The primary structure comprises 406 residues: Outer membrane protein assembly factor BamB (406 aa).

The signal sequence occupies residues 1 to 23 (MMKQVDMYKRVALIALMGMSLAG). Residue C24 is the site of N-palmitoyl cysteine attachment. Residue C24 is the site of S-diacylglycerol cysteine attachment.

It belongs to the BamB family. Part of the Bam complex.

Its subcellular location is the cell outer membrane. Its function is as follows. Part of the outer membrane protein assembly complex, which is involved in assembly and insertion of beta-barrel proteins into the outer membrane. In Xanthomonas campestris pv. campestris (strain ATCC 33913 / DSM 3586 / NCPPB 528 / LMG 568 / P 25), this protein is Outer membrane protein assembly factor BamB.